The following is a 399-amino-acid chain: Probable 3-ketosteroid-9-alpha-monooxygenase, oxygenase component (399 aa).

A Rieske domain is found at 26–128; that stretch reads WHCLGLVRDF…VAEVSGQLFV (103 aa). Cys67, His69, Cys86, and His89 together coordinate [2Fe-2S] cluster. Residues Asn175, His181, His186, and Asp307 each contribute to the Fe cation site.

In terms of assembly, homotrimer. The two-component system 3-ketosteroid-9-alpha-monooxygenase is composed of an oxygenase component KshA and a reductase component KshB. [2Fe-2S] cluster serves as cofactor. It depends on Fe cation as a cofactor.

Its function is as follows. Could catalyze the introduction of a 9alpha-hydroxyl moiety into the ring B of 3-ketosteroid substrates. In Rhodococcus rhodochrous, this protein is Probable 3-ketosteroid-9-alpha-monooxygenase, oxygenase component.